Here is a 225-residue protein sequence, read N- to C-terminus: Chromosome partition protein MukE (225 aa).

Residues 197-225 form a disordered region; sequence RDGEAMPIENHLQLNDETEENQPDSGEEE. Acidic residues predominate over residues 212–225; it reads DETEENQPDSGEEE.

It belongs to the MukE family. Interacts, and probably forms a ternary complex, with MukF and MukB. The complex formation is stimulated by calcium or magnesium.

It localises to the cytoplasm. The protein resides in the nucleoid. In terms of biological role, involved in chromosome condensation, segregation and cell cycle progression. May participate in facilitating chromosome segregation by condensation DNA from both sides of a centrally located replisome during cell division. Probably acts via its interaction with MukB and MukF. This Escherichia coli O157:H7 protein is Chromosome partition protein MukE.